The primary structure comprises 129 residues: Profilin-4 (129 aa).

This sequence belongs to the profilin family.

It localises to the cytoplasm. Its function is as follows. Involved in male fertility. Required for manchette development and acrosome biogenesis during spermiogenesis. Binds in vitro to phospholipids, including phosphatidylinositol 3-phosphate (PtdIns(3)P), phosphatidylinositol 4,5-bisphosphate (PtdIns(4,5)P2), phosphatidylinositol 4-phosphate (PtdIns(4)P) and phosphatidic acid (PA). Contrary to other profilin family members, does not bind to actin in vitro. This is Profilin-4 (PFN4) from Bos taurus (Bovine).